A 453-amino-acid chain; its full sequence is DNA repair protein RadA (453 aa).

A C4-type zinc finger spans residues 10 to 27 (CQECGYQSPKYLGRCPNC). 95–102 (GDPGIGKS) contributes to the ATP binding site. Residues 251–255 (KNRFG) carry the RadA KNRFG motif motif. Residues 350 to 453 (DAYLKSAGGV…VGQVLNAVFS (104 aa)) form a lon-protease-like region.

It belongs to the RecA family. RadA subfamily.

Functionally, DNA-dependent ATPase involved in processing of recombination intermediates, plays a role in repairing DNA breaks. Stimulates the branch migration of RecA-mediated strand transfer reactions, allowing the 3' invading strand to extend heteroduplex DNA faster. Binds ssDNA in the presence of ADP but not other nucleotides, has ATPase activity that is stimulated by ssDNA and various branched DNA structures, but inhibited by SSB. Does not have RecA's homology-searching function. The protein is DNA repair protein RadA of Streptococcus pyogenes serotype M1.